The primary structure comprises 146 residues: Small ribosomal subunit protein bS16 (146 aa).

Residues 119 to 146 form a disordered region; sequence GSENKGGKSKKAEEKSAEKTAEKSEGEA. Over residues 128–146 the composition is skewed to basic and acidic residues; the sequence is KKAEEKSAEKTAEKSEGEA.

The protein belongs to the bacterial ribosomal protein bS16 family.

In Thermobifida fusca (strain YX), this protein is Small ribosomal subunit protein bS16.